We begin with the raw amino-acid sequence, 345 residues long: Glycerol-3-phosphate dehydrogenase [NAD(P)+] (345 aa).

Residues serine 11, tryptophan 12, histidine 32, arginine 33, and lysine 106 each coordinate NADPH. Sn-glycerol 3-phosphate-binding residues include lysine 106, glycine 137, and serine 139. An NADPH-binding site is contributed by alanine 141. Positions 192, 245, 255, 256, and 257 each coordinate sn-glycerol 3-phosphate. Lysine 192 acts as the Proton acceptor in catalysis. Arginine 256 lines the NADPH pocket. 2 residues coordinate NADPH: valine 280 and glutamate 282.

This sequence belongs to the NAD-dependent glycerol-3-phosphate dehydrogenase family.

It is found in the cytoplasm. The enzyme catalyses sn-glycerol 3-phosphate + NAD(+) = dihydroxyacetone phosphate + NADH + H(+). It catalyses the reaction sn-glycerol 3-phosphate + NADP(+) = dihydroxyacetone phosphate + NADPH + H(+). The protein operates within membrane lipid metabolism; glycerophospholipid metabolism. With respect to regulation, does not seem to be inhibited by sn-glycerol 3-phosphate, in contrast to the E.coli homolog enzyme which is very sensitive to allosteric inhibition by G3P. Catalyzes the reduction of the glycolytic intermediate dihydroxyacetone phosphate (DHAP) to sn-glycerol 3-phosphate (G3P), the key precursor for phospholipid synthesis. In Bacillus subtilis (strain 168), this protein is Glycerol-3-phosphate dehydrogenase [NAD(P)+].